We begin with the raw amino-acid sequence, 576 residues long: RING finger and SPRY domain-containing protein 1 (576 aa).

An N-terminal signal peptide occupies residues 1–16 (MIVFGWAVFLASRSLG). S50 carries the post-translational modification Phosphoserine. The disordered stretch occupies residues 50 to 99 (SGTDDSVDTQQQQAENSAVPTADTRSQPRDPVRPPRRGRGPHEPRRKKQN). The segment covering 57 to 68 (DTQQQQAENSAV) has biased composition (polar residues). Residues 83–97 (PPRRGRGPHEPRRKK) are compositionally biased toward basic residues. Positions 300 to 483 (LFLKEGRQLT…CEFNFGAKPF (184 aa)) constitute a B30.2/SPRY domain. N314 carries an N-linked (GlcNAc...) asparagine glycan. The RING-type zinc-finger motif lies at 527-562 (CSLCCDEVADTQLKPCGHSDLCMDCALQLETCPLCR).

It localises to the secreted. In Pongo abelii (Sumatran orangutan), this protein is RING finger and SPRY domain-containing protein 1 (RSPRY1).